A 530-amino-acid polypeptide reads, in one-letter code: MAVKALNPKAEVARAQAALAVNISAARGLQDVLRTNLGPKGTMKMLVSGAGDIKLTKDGNVLLQEMQIQHPTASLIAKVATAQDDITGDGTTSNVLIIGELLKQADLYISEGLHPRIVAEGFEIAKEKALEVLEQVKVTKEMDRETLIDVAKTSLRTKVHTELADILTEAVVDSVLAVRKPGEPIDLHMVEIMEMKHKSETDTTLIRGLVLDHGARHPDMKKRVEDAYILTCNVSLEYEKTEVSAGFFYKSAEEREKLVKAERKFIEDRVSKIIDLKRRVCGDSDKGFIVINQKGIDPFSLDALAKEGIVALRRAKRRNMERLTLACGGTAMNSVEDLTPDCLGHAGLVYEYTLGEEKYTFIEKCDNPRSVTLLIRGPNKHTLTQIKDAVRDGLRAVKNAIEDGCVIPGAGALEVAVANALVKHKPNVKGRAQLGVQAFADALLIIPKVLAQNSGYDPQETLVKVQAEHAESGQLTGVDLNTGEPMVAAAAGIWDNYNVKKQLLHSCTVIASNILLVDEIMRAGMSSLKG.

Gly38 serves as a coordination point for ADP. An ATP-binding site is contributed by Gly38. Asp89 provides a ligand contact to Mg(2+). ADP-binding residues include Gly90, Thr91, Thr92, Ser93, Thr157, Lys158, and Ala410. Residues Gly90, Thr91, and Thr92 each coordinate ATP. ATP contacts are provided by Ala410, Gly411, Asp495, and Lys500. Residue Asp495 participates in ADP binding.

As to quaternary structure, component of the chaperonin-containing T-complex (TRiC), a hexadecamer composed of two identical back-to-back stacked rings enclosing a protein folding chamber. Each ring is made up of eight different subunits: TCP1/CCT1, CCT2, CCT3, CCT4, CCT5, CCT6A/CCT6, CCT7, CCT8. Interacts with PACRG.

It is found in the cytoplasm. It carries out the reaction ATP + H2O = ADP + phosphate + H(+). Component of the chaperonin-containing T-complex (TRiC), a molecular chaperone complex that assists the folding of actin, tubulin and other proteins upon ATP hydrolysis. The protein is T-complex protein 1 subunit zeta of Gallus gallus (Chicken).